We begin with the raw amino-acid sequence, 351 residues long: Transaldolase (351 aa).

K138 functions as the Schiff-base intermediate with substrate in the catalytic mechanism.

This sequence belongs to the transaldolase family. Type 2 subfamily.

It is found in the cytoplasm. It catalyses the reaction D-sedoheptulose 7-phosphate + D-glyceraldehyde 3-phosphate = D-erythrose 4-phosphate + beta-D-fructose 6-phosphate. It functions in the pathway carbohydrate degradation; pentose phosphate pathway; D-glyceraldehyde 3-phosphate and beta-D-fructose 6-phosphate from D-ribose 5-phosphate and D-xylulose 5-phosphate (non-oxidative stage): step 2/3. Transaldolase is important for the balance of metabolites in the pentose-phosphate pathway. The polypeptide is Transaldolase (tal) (Neisseria meningitidis serogroup A / serotype 4A (strain DSM 15465 / Z2491)).